Reading from the N-terminus, the 212-residue chain is FMN-dependent NAD(P)H:quinone oxidoreductase 1 (212 aa).

FMN-binding positions include S10, 16–18 (SQS), and 97–100 (MYNF). Residues N99 and Y131 each coordinate substrate. Residues 145 to 148 (SRGG) and E187 each bind FMN. Residue E188 coordinates substrate.

It belongs to the azoreductase type 1 family. In terms of assembly, homodimer. Homotetramer formed by a dimer of dimers when the ionic strength is high. The cofactor is FMN.

It catalyses the reaction 2 a quinone + NADPH + H(+) = 2 a 1,4-benzosemiquinone + NADP(+). It carries out the reaction 2 a quinone + NADH + H(+) = 2 a 1,4-benzosemiquinone + NAD(+). The catalysed reaction is N,N-dimethyl-1,4-phenylenediamine + anthranilate + 2 NAD(+) = 2-(4-dimethylaminophenyl)diazenylbenzoate + 2 NADH + 2 H(+). With respect to regulation, azoreductase activity increases with salt strength. Functionally, quinone reductase that provides resistance to thiol-specific stress caused by electrophilic quinones. Shows a preference for benzoquinones. Its function is as follows. Also exhibits azoreductase activity. Catalyzes the reductive cleavage of the azo bond in aromatic azo compounds to the corresponding amines. NADPH is the preferred electron donor for azoreductase activity, but it can also use NADH. Can reduce different classes of azo dyes, including the common azo dyes methyl red and p-aminoazobenzene sulfonamide (PAABSA). Can activate several azo pro-drugs used in the treatment of inflammatory bowel disease (IBD), including balsalazide, sulfasalazine and olsalazine. Also acts as a nitrodeductase, and can reduce and hence activate the nitroaromatic drug nitrofurazone, a broad spectrum antibiotic. The protein is FMN-dependent NAD(P)H:quinone oxidoreductase 1 of Pseudomonas aeruginosa (strain ATCC 15692 / DSM 22644 / CIP 104116 / JCM 14847 / LMG 12228 / 1C / PRS 101 / PAO1).